Reading from the N-terminus, the 722-residue chain is Protein Aster-A (722 aa).

Positions 1-62 (MFDTTPHSGR…KSGVSGTLST (62 aa)) are disordered. Low complexity predominate over residues 8 to 18 (SGRSSPSSSPS). The 68-residue stretch at 93–160 (EDFRKLFSKL…KEVTCLKKEK (68 aa)) folds into the GRAM domain. Positions 256–336 (ISPSGAADHS…DGPTSSLGPL (81 aa)) are disordered. A phosphoserine mark is found at serine 265, serine 269, serine 273, and serine 417. The region spanning 369–540 (SGRLLINSVF…ELAKAEKLSL (172 aa)) is the VASt domain. Positions 561–600 (LSWRGHRDGPQHPDPDPCTQTSMHTSGSLSSRFSEPSVDQ) are disordered. Residues 565–575 (GHRDGPQHPDP) show a composition bias toward basic and acidic residues. A compositionally biased stretch (polar residues) spans 578 to 594 (CTQTSMHTSGSLSSRFS). The helical transmembrane segment at 609-629 (ALVLISIVLIVLIALNALLFY) threads the bilayer.

As to expression, highly expressed in the brain.

It is found in the endoplasmic reticulum membrane. Its subcellular location is the cell membrane. It localises to the cytoplasmic vesicle. The protein resides in the autophagosome. Functionally, cholesterol transporter that mediates non-vesicular transport of cholesterol from the plasma membrane (PM) to the endoplasmic reticulum (ER). Contains unique domains for binding cholesterol and the PM, thereby serving as a molecular bridge for the transfer of cholesterol from the PM to the ER. Plays a crucial role in cholesterol homeostasis and has the unique ability to localize to the PM based on the level of membrane cholesterol. In lipid-poor conditions localizes to the ER membrane and in response to excess cholesterol in the PM is recruited to the endoplasmic reticulum-plasma membrane contact sites (EPCS) which is mediated by the GRAM domain. At the EPCS, the sterol-binding VASt/ASTER domain binds to the cholesterol in the PM and facilitates its transfer from the PM to ER. May play a role in tumor progression. Plays a role in autophagy regulation and is required for biogenesis of the autophagosome. This function in autophagy requires its cholesterol-transfer activity. This Mus musculus (Mouse) protein is Protein Aster-A.